The sequence spans 1096 residues: Cohesin subunit scc-3 (1096 aa).

A compositionally biased stretch (polar residues) spans 1-21; that stretch reads MSETPTDQSPQRMSTRNQARV. Disordered regions lie at residues 1–53 and 67–106; these read MSET…KKRA and NLNNFSTPPKRGRPRGGGLGSARGGRAPMVRRTTTEESAE. Residues 261–312 are a coiled coil; the sequence is IELTQSKEKTSKQIEAEKAKLKNNSAGNEKYEALVAQRTQTEERAEEIRQII. One can recognise an SCD domain in the interval 320 to 405; the sequence is FVHRYRDVVP…NKFKDRLVSM (86 aa). Residues 1057-1096 form a disordered region; the sequence is DNMSVRSGMTVTSNATMRSTASSTRGRGRGRGRSRIADDF. Residues 1060-1073 are compositionally biased toward polar residues; that stretch reads SVRSGMTVTSNATM.

It belongs to the SCC3 family. Component of the cohesin complex, composed of the smc-1 and smc-3 heterodimer attached via their hinge domain, scc-1 which links them, and scc-3. Interacts with scc-1, smc-1 and tim-1. As to expression, expressed in gonadal cells.

It is found in the nucleus. Its subcellular location is the chromosome. Component of the cohesin complex, a complex required for the cohesion of sister chromatids after DNA replication. The cohesin complex apparently forms a large proteinaceous ring within which sister chromatids can be trapped. At anaphase, the scc-1 subunit of the complex is cleaved and dissociates from chromatin, allowing sister chromatids to segregate. The cohesin complex may also play a role in spindle pole assembly during mitosis. Plays an essential role in cell division during embryonic development. Required for the assembly of the synaptonemal complex between homologous chromosomes to promote sister chromatid cohesion during mitosis and meiosis. Has a role in stabilization of homologous chromosome associations during meiotic synapsis. Required for chromosome segregation during mitosis and meiosis. Plays a role in DNA double-strand break (DSB) repair during meiotic recombination and promotes the assembly of the 9-1-1 cell-cycle checkpoint response complex which is required for inducing apoptosis in response to DNA damage, at DNA damage sites. The sequence is that of Cohesin subunit scc-3 from Caenorhabditis elegans.